The sequence spans 346 residues: tRNA N6-adenosine threonylcarbamoyltransferase (346 aa).

Fe cation is bound by residues His111 and His115. Substrate-binding positions include 134-138, Asp167, Gly180, and Asn277; that span reads LVSGG. Asp305 lines the Fe cation pocket.

Belongs to the KAE1 / TsaD family. Fe(2+) is required as a cofactor.

Its subcellular location is the cytoplasm. The enzyme catalyses L-threonylcarbamoyladenylate + adenosine(37) in tRNA = N(6)-L-threonylcarbamoyladenosine(37) in tRNA + AMP + H(+). In terms of biological role, required for the formation of a threonylcarbamoyl group on adenosine at position 37 (t(6)A37) in tRNAs that read codons beginning with adenine. Is involved in the transfer of the threonylcarbamoyl moiety of threonylcarbamoyl-AMP (TC-AMP) to the N6 group of A37, together with TsaE and TsaB. TsaD likely plays a direct catalytic role in this reaction. The protein is tRNA N6-adenosine threonylcarbamoyltransferase of Bordetella pertussis (strain Tohama I / ATCC BAA-589 / NCTC 13251).